The chain runs to 306 residues: Protein YIPF1 (306 aa).

Topologically, residues 1–119 (MAAVDDLQFE…VRLYIRSNPD (119 aa)) are cytoplasmic. The disordered stretch occupies residues 30 to 63 (IEDPSVSFGHQPRPPGSVGREEDEELLGNNDSDE). The segment covering 50–63 (EEDEELLGNNDSDE) has biased composition (acidic residues). A helical membrane pass occupies residues 120–140 (LYGPFWICATLVFAIAISGNL). Residues 141 to 162 (SNFLIHLGEKTYHYVPEFQKVS) lie on the Lumenal side of the membrane. Residues 163–183 (IAATVIYAYAWLVPLALWGFL) traverse the membrane as a helical segment. Topologically, residues 184-200 (LWRNSKVMSMVSYSFLE) are cytoplasmic. Residues 201 to 221 (IVCVYGYSLFIYIPTAVLWII) traverse the membrane as a helical segment. Over 222–227 (PQRVVR) the chain is Lumenal. A helical membrane pass occupies residues 228–248 (WVLVMIALGVSGSVLVMTFWP). The Cytoplasmic segment spans residues 249–256 (AVREDNRR). Residues 257-277 (VALATIVTIVLLHVLLSVGCL) form a helical membrane-spanning segment. The Lumenal segment spans residues 278–306 (AYFFDAPEMDHLPAAITTPNQTVTAAKSS). N-linked (GlcNAc...) asparagine glycosylation is present at N297.

This sequence belongs to the YIP1 family. In terms of assembly, interacts with YIPF6; this interaction may stabilize YIPF1. May also form a ternary complex with YIPF2 and YIPF6.

The protein localises to the golgi apparatus. It is found in the cis-Golgi network membrane. The protein resides in the trans-Golgi network membrane. It localises to the late endosome membrane. This chain is Protein YIPF1 (Yipf1), found in Mus musculus (Mouse).